The sequence spans 108 residues: Cyclin-dependent protein kinase inhibitor SMR13 (108 aa).

Probable cyclin-dependent protein kinase (CDK) inhibitor that functions as a repressor of mitosis in the endoreduplication cell cycle. This chain is Cyclin-dependent protein kinase inhibitor SMR13, found in Arabidopsis thaliana (Mouse-ear cress).